A 305-amino-acid chain; its full sequence is U6 small nuclear RNA (adenine-(43)-N(6))-methyltransferase (305 aa).

S-adenosyl-L-methionine contacts are provided by R85, G110, E133, S164, and N186. The interval 194 to 217 is disordered; that stretch reads SPNPFGGNTRNPQRRPAPNNVRTG.

This sequence belongs to the methyltransferase superfamily. METTL16/RlmF family.

It carries out the reaction adenosine in U6 snRNA + S-adenosyl-L-methionine = N(6)-methyladenosine in U6 snRNA + S-adenosyl-L-homocysteine + H(+). Its function is as follows. RNA N6-methyltransferase that mediates N6-methylation of adenine of U6 small nuclear RNA (U6 snRNA). The protein is U6 small nuclear RNA (adenine-(43)-N(6))-methyltransferase of Drosophila pseudoobscura pseudoobscura (Fruit fly).